Here is a 431-residue protein sequence, read N- to C-terminus: MPLRLDNASPDFASKFKAFLAMKREVAADIEAATRAIVDDVAHRGDAALLEATEKFDRLTLDAAGMRVGEAEVEAAVKACDSETVDALKLARDRIEFFHRRQLPKDDRFTDPLGVELGWRWSAIEAVGLYVPGGTAAYPSSVLMNAIPAKVAGVERVVMVVPSPGGTLNPLVLAAAQLAGATEIYRIGGAQAVAALAYGTATIAPVAKIVGPGNAYVAAAKRLVFGRVGIDMIAGPSEVVVVADKTANPDWIAADLLAQAEHDANAQSILITDSAVLAADVERALAAQLTTLPRVKIARASWDEFGAIIKVAKLEDAVPLANAIAAEHLEIMTADPEAFADKIRNAGAIFLGGHTPEAIGDYVGGSNHVLPTARSARFSSGLGVLDFMKRTSILKCGPEQLAVLGPAAMALGKAEGLDAHARSVGLRLNQR.

3 residues coordinate NAD(+): Tyr-130, Gln-191, and Asn-214. Substrate contacts are provided by Ser-237, Gln-259, and His-262. Zn(2+)-binding residues include Gln-259 and His-262. Residues Glu-327 and His-328 each act as proton acceptor in the active site. Residues His-328, Asp-361, Glu-415, and His-420 each contribute to the substrate site. Asp-361 is a Zn(2+) binding site. A Zn(2+)-binding site is contributed by His-420.

This sequence belongs to the histidinol dehydrogenase family. Zn(2+) serves as cofactor.

The enzyme catalyses L-histidinol + 2 NAD(+) + H2O = L-histidine + 2 NADH + 3 H(+). Its pathway is amino-acid biosynthesis; L-histidine biosynthesis; L-histidine from 5-phospho-alpha-D-ribose 1-diphosphate: step 9/9. Its function is as follows. Catalyzes the sequential NAD-dependent oxidations of L-histidinol to L-histidinaldehyde and then to L-histidine. The sequence is that of Histidinol dehydrogenase from Rhodopseudomonas palustris (strain ATCC BAA-98 / CGA009).